Here is a 925-residue protein sequence, read N- to C-terminus: Translation initiation factor IF-2 (925 aa).

Disordered stretches follow at residues 52-84 and 98-326; these read GGGK…VKAP and AGGN…GVRL. The span at 57-68 shows a compositional bias: low complexity; the sequence is AEGAAKAPAKAA. Positions 69-84 are enriched in basic and acidic residues; the sequence is AKGDAKTAAKGDVKAP. Residues 98 to 138 show a composition bias toward low complexity; sequence AGGNGEAAAPPAQPGGTATTPAAQATPEAPARPGPAAARPS. 2 stretches are compositionally biased toward pro residues: residues 139-169 and 193-207; these read APAP…PAPK and PRPV…PGAP. Positions 236–296 are enriched in gly residues; the sequence is RPGGGRPGGP…GAAGAFGRPG (61 aa). Residues 300–309 show a composition bias toward basic residues; it reads RRGRKSKRQK. The region spanning 421-592 is the tr-type G domain; the sequence is TRPPVVTVMG…AVLLTADAAL (172 aa). The G1 stretch occupies residues 430-437; it reads GHVDHGKT. 430–437 lines the GTP pocket; the sequence is GHVDHGKT. The interval 455-459 is G2; sequence GITQH. Residues 480–483 are G3; the sequence is DTPG. Residues 480-484 and 534-537 contribute to the GTP site; these read DTPGH and NKID. The segment at 534–537 is G4; the sequence is NKID. Positions 570-572 are G5; it reads SAK.

This sequence belongs to the TRAFAC class translation factor GTPase superfamily. Classic translation factor GTPase family. IF-2 subfamily.

The protein localises to the cytoplasm. Functionally, one of the essential components for the initiation of protein synthesis. Protects formylmethionyl-tRNA from spontaneous hydrolysis and promotes its binding to the 30S ribosomal subunits. Also involved in the hydrolysis of GTP during the formation of the 70S ribosomal complex. In Mycolicibacterium paratuberculosis (strain ATCC BAA-968 / K-10) (Mycobacterium paratuberculosis), this protein is Translation initiation factor IF-2.